The chain runs to 215 residues: High mobility group protein B1 (215 aa).

1–10 (MGKGDPKKPR) contacts heparin. The segment at 1–97 (MGKGDPKKPR…KFKDPNAPKR (97 aa)) is sufficient for interaction with HAVCR2. An N6-acetyllysine mark is found at Lys3, Lys7, Lys8, and Lys12. An LPS binding (delipidated) region spans residues 3-15 (KGDPKKPRGKMSS). Residues 9–79 (PRGKMSSYAF…RYEREMKTYI (71 aa)) constitute a DNA-binding region (HMG box 1). Cys23 is subject to Cysteine sulfonic acid (-SO3H); alternate. Residues Cys23 and Cys45 are joined by a disulfide bond. Positions 27 to 43 (HKKKHPDASVNFSEFSK) match the Nuclear localization signal (NLS) 1 motif. N6-acetyllysine is present on residues Lys28, Lys29, and Lys30. Residue Lys28 forms an Isoglutamyl lysine isopeptide (Lys-Gln) (interchain with Q-?) linkage. Ser35 is modified (phosphoserine). Lys43 carries the N6-acetyllysine modification. Residues Lys43 and Lys44 each participate in an isoglutamyl lysine isopeptide (Lys-Gln) (interchain with Q-?) cross-link. Cys45 carries the post-translational modification Cysteine sulfonic acid (-SO3H); alternate. Position 51 is a phosphothreonine (Thr51). An Isoglutamyl lysine isopeptide (Lys-Gln) (interchain with Q-?) cross-link involves residue Lys68. Residues 76 to 95 (KTYIPPKGETKKKFKDPNAP) form a disordered region. The tract at residues 80-96 (PPKGETKKKFKDPNAPK) is LPS binding (Lipid A). The segment covering 83 to 94 (GETKKKFKDPNA) has biased composition (basic and acidic residues). The tract at residues 89–108 (FKDPNAPKRPPSAFFLFCSE) is cytokine-stimulating activity. Lys90 is modified (N6-acetyllysine). Residues 95-163 (PKRPPSAFFL…KYEKDIAAYR (69 aa)) constitute a DNA-binding region (HMG box 2). Ser100 is subject to Phosphoserine. The residue at position 106 (Cys106) is a Cysteine sulfonic acid (-SO3H). 7 positions are modified to N6-acetyllysine: Lys127, Lys128, Lys141, Lys172, Lys173, Lys177, and Lys180. The binding to AGER/RAGE stretch occupies residues 150-183 (KLKEKYEKDIAAYRAKGKPDAAKKGVVKAEKSKK). Positions 162 to 179 (YRAKGKPDAAKKGVVKAE) are enriched in basic and acidic residues. The disordered stretch occupies residues 162 to 215 (YRAKGKPDAAKKGVVKAEKSKKKKEEEEDEEDEEDEEEEEDEEDEEEEEDDDDE). Positions 178-184 (AEKSKKK) match the Nuclear localization signal (NLS) 2 motif. Residue Lys180 forms an Isoglutamyl lysine isopeptide (Lys-Gln) (interchain with Q-?) linkage. Ser181 is subject to ADP-ribosylserine. 4 positions are modified to N6-acetyllysine: Lys182, Lys183, Lys184, and Lys185. Isoglutamyl lysine isopeptide (Lys-Gln) (interchain with Q-?) cross-links involve residues Lys182, Lys183, and Lys184. The span at 187–215 (EEEDEEDEEDEEEEEDEEDEEEEEDDDDE) shows a compositional bias: acidic residues.

Belongs to the HMGB family. Interacts (fully reduced HMGB1) with CXCL12; probably in a 1:2 ratio involving two molecules of CXCL12, each interacting with one HMG box of HMGB1; inhibited by glycyrrhizin. Associates with the TLR4:LY96 receptor complex. Component of the RAG complex composed of core components RAG1 and RAG2, and associated component HMGB1 or HMGB2. Interacts (in cytoplasm upon starvation) with BECN1; inhibits the interaction of BECN1 and BCL2 leading to promotion of autophagy. Interacts with KPNA1; involved in nuclear import. Interacts with SREBF1, TLR2, TLR4, TLR9, PTPRZ1, APEX1, FEN1, POLB, TERT. Interacts with IL1B, AGER, MSH2, XPA, XPC, HNF1A, TP53. Interacts with CD24; the probable CD24:SIGLEC10 complex is proposed to inhibit HGMB1-mediated tissue damage immune response. Interacts with THBD; prevents HGMB1 interaction with ACER/RAGE and inhibits HGMB1 pro-inflammatory activity. Interacts with HAVCR2; impairs HMGB1 binding to B-DNA and likely HMGB1-mediated innate immune response. Interacts with XPO1; mediating nuclear export. Interacts with receptor RAGE/AGER. Post-translationally, phosphorylated at serine residues. Phosphorylation in both NLS regions is required for cytoplasmic translocation followed by secretion. Phosphorylation at Thr-51 within the NLS is crucial for secretion induced by porcine reproductive and respiratory syndrome virus (PRRSV). Acetylated on multiple sites upon stimulation with LPS. Acetylation on lysine residues in the nuclear localization signals (NLS 1 and NLS 2) leads to cytoplasmic localization and subsequent secretion. Acetylation on Lys-3 results in preferential binding to DNA ends and impairs DNA bending activity. In terms of processing, reduction/oxidation of cysteine residues Cys-23, Cys-45 and Cys-106 and a possible intramolecular disulfide bond involving Cys-23 and Cys-45 give rise to different redox forms with specific functional activities in various cellular compartments: 1- fully reduced HMGB1 (HMGB1C23hC45hC106h), 2- disulfide HMGB1 (HMGB1C23-C45C106h) and 3- sulfonyl HMGB1 (HMGB1C23soC45soC106so). Post-translationally, poly-ADP-ribosylated by PARP1 when secreted following stimulation with LPS. In vitro cleavage by CASP1 is liberating a HMG box 1-containing peptide which may mediate immunogenic activity; the peptide antagonizes apoptosis-induced immune tolerance. Can be proteolytically cleaved by a thrombin:thrombomodulin complex; reduces binding to heparin and pro-inflammatory activities. In terms of processing, forms covalent cross-links mediated by transglutaminase TGM2, between a glutamine and the epsilon-amino group of a lysine residue, forming homopolymers and heteropolymers.

It is found in the nucleus. The protein resides in the chromosome. The protein localises to the cytoplasm. It localises to the secreted. Its subcellular location is the cell membrane. It is found in the endosome. The protein resides in the endoplasmic reticulum-Golgi intermediate compartment. In terms of biological role, multifunctional redox sensitive protein with various roles in different cellular compartments. In the nucleus is one of the major chromatin-associated non-histone proteins and acts as a DNA chaperone involved in replication, transcription, chromatin remodeling, V(D)J recombination, DNA repair and genome stability. Proposed to be an universal biosensor for nucleic acids. Promotes host inflammatory response to sterile and infectious signals and is involved in the coordination and integration of innate and adaptive immune responses. In the cytoplasm functions as a sensor and/or chaperone for immunogenic nucleic acids implicating the activation of TLR9-mediated immune responses, and mediates autophagy. Acts as a danger-associated molecular pattern (DAMP) molecule that amplifies immune responses during tissue injury. Released to the extracellular environment can bind DNA, nucleosomes, IL-1 beta, CXCL12, AGER isoform 2/sRAGE, lipopolysaccharide (LPS) and lipoteichoic acid (LTA), and activates cells through engagement of multiple surface receptors. In the extracellular compartment fully reduced HMGB1 (released by necrosis) acts as a chemokine, disulfide HMGB1 (actively secreted) as a cytokine, and sulfonyl HMGB1 (released from apoptotic cells) promotes immunological tolerance. Has proangiogenic activity. May be involved in platelet activation. Binds to phosphatidylserine and phosphatidylethanolamide. Bound to RAGE mediates signaling for neuronal outgrowth. May play a role in accumulation of expanded polyglutamine (polyQ) proteins. Its function is as follows. Nuclear functions are attributed to fully reduced HGMB1. Associates with chromatin and binds DNA with a preference to non-canonical DNA structures such as single-stranded DNA, DNA-containing cruciforms or bent structures, supercoiled DNA and ZDNA. Can bent DNA and enhance DNA flexibility by looping thus providing a mechanism to promote activities on various gene promoters by enhancing transcription factor binding and/or bringing distant regulatory sequences into close proximity. May be involved in nucleotide excision repair (NER), mismatch repair (MMR) and base excision repair (BER) pathways, and double strand break repair such as non-homologous end joining (NHEJ). Involved in V(D)J recombination by acting as a cofactor of the RAG complex: acts by stimulating cleavage and RAG protein binding at the 23 bp spacer of conserved recombination signal sequences (RSS). In vitro can displace histone H1 from highly bent DNA. Can restructure the canonical nucleosome leading to relaxation of structural constraints for transcription factor-binding. Enhances binding of sterol regulatory element-binding proteins (SREBPs) such as SREBF1 to their cognate DNA sequences and increases their transcriptional activities. Facilitates binding of TP53 to DNA. May be involved in mitochondrial quality control and autophagy in a transcription-dependent fashion implicating HSPB1. Can modulate the activity of the telomerase complex and may be involved in telomere maintenance. Represses porcine circovirus type 2 replication within the nucleus by binding to the Ori region of the viral genome. Functionally, in the cytoplasm proposed to dissociate the BECN1:BCL2 complex via competitive interaction with BECN1 leading to autophagy activation. Can protect BECN1 and ATG5 from calpain-mediated cleavage and thus proposed to control their proautophagic and proapoptotic functions and to regulate the extent and severity of inflammation-associated cellular injury. In myeloid cells has a protective role against endotoxemia and bacterial infection by promoting autophagy. Involved in endosomal translocation and activation of TLR9 in response to CpG-DNA in macrophages. In the extracellular compartment (following either active secretion or passive release) involved in regulation of the inflammatory response. Fully reduced HGMB1 (which subsequently gets oxidized after release) in association with CXCL12 mediates the recruitment of inflammatory cells during the initial phase of tissue injury; the CXCL12:HMGB1 complex triggers CXCR4 homodimerization. Induces the migration of monocyte-derived immature dendritic cells and seems to regulate adhesive and migratory functions of neutrophils implicating AGER/RAGE and ITGAM. Can bind to various types of DNA and RNA including microbial unmethylated CpG-DNA to enhance the innate immune response to nucleic acids. Proposed to act in promiscuous DNA/RNA sensing which cooperates with subsequent discriminative sensing by specific pattern recognition receptors. Promotes extracellular DNA-induced AIM2 inflammasome activation implicating AGER/RAGE. Disulfide HMGB1 binds to transmembrane receptors, such as AGER/RAGE, TLR2, TLR4 and probably TREM1, thus activating their signal transduction pathways. Mediates the release of cytokines/chemokines such as TNF, IL-1, IL-6, IL-8, CCL2, CCL3, CCL4 and CXCL10. Promotes secretion of interferon-gamma by macrophage-stimulated natural killer (NK) cells in concert with other cytokines like IL-2 or IL-12. TLR4 is proposed to be the primary receptor promoting macrophage activation and signaling through TLR4 seems to implicate LY96/MD-2. In bacterial LPS- or LTA-mediated inflammatory responses binds to the endotoxins and transfers them to CD14 for signaling to the respective TLR4:LY96 and TLR2 complexes. Contributes to tumor proliferation by association with ACER/RAGE. Can bind to IL1-beta and signals through the IL1R1:IL1RAP receptor complex. Binding to class A CpG activates cytokine production in plasmacytoid dendritic cells implicating TLR9, MYD88 and AGER/RAGE and can activate autoreactive B cells. Via HMGB1-containing chromatin immune complexes may also promote B cell responses to endogenous TLR9 ligands through a B-cell receptor (BCR)-dependent and ACER/RAGE-independent mechanism. Inhibits phagocytosis of apoptotic cells by macrophages; the function is dependent on poly-ADP-ribosylation and involves binding to phosphatidylserine on the cell surface of apoptotic cells. In adaptive immunity may be involved in enhancing immunity through activation of effector T cells and suppression of regulatory T (TReg) cells. In contrast, without implicating effector or regulatory T-cells, required for tumor infiltration and activation of T-cells expressing the lymphotoxin LTA:LTB heterotrimer thus promoting tumor malignant progression. Also reported to limit proliferation of T-cells. Released HMGB1:nucleosome complexes formed during apoptosis can signal through TLR2 to induce cytokine production. Involved in induction of immunological tolerance by apoptotic cells; its pro-inflammatory activities when released by apoptotic cells are neutralized by reactive oxygen species (ROS)-dependent oxidation specifically on Cys-106. During macrophage activation by activated lymphocyte-derived self apoptotic DNA (ALD-DNA) promotes recruitment of ALD-DNA to endosomes. This chain is High mobility group protein B1 (HMGB1), found in Sus scrofa (Pig).